The chain runs to 218 residues: Ras-related protein RABA5e (218 aa).

19–26 (GDSAVGKS) contacts GTP. The Effector region motif lies at 41–49 (SKATIGVEF). Residues 67–71 (DTAGQ), 125–128 (NKCD), and 155–156 (SA) contribute to the GTP site. 2 S-geranylgeranyl cysteine lipidation sites follow: Cys-214 and Cys-215. Cys-215 is modified (cysteine methyl ester). Residues 216 to 218 (SST) constitute a propeptide, removed in mature form.

Belongs to the small GTPase superfamily. Rab family.

The protein resides in the cell membrane. Intracellular vesicle trafficking and protein transport. This Arabidopsis thaliana (Mouse-ear cress) protein is Ras-related protein RABA5e (RABA5E).